Here is a 152-residue protein sequence, read N- to C-terminus: Acidic phospholipase A2 S17-58 (152 aa).

Positions 1–19 (MYPAHLLVLLAVCVSLLGA) are cleaved as a signal peptide. Positions 20–27 (SNIPLPSL) are excised as a propeptide. 7 cysteine pairs are disulfide-bonded: C38/C104, C54/C151, C56/C72, C71/C132, C78/C125, C88/C118, and C111/C123. 3 residues coordinate Ca(2+): Y55, G57, and G59. The active site involves H75. D76 is a Ca(2+) binding site. D126 is an active-site residue.

This sequence belongs to the phospholipase A2 family. Group I subfamily. D49 sub-subfamily. The cofactor is Ca(2+). As to expression, expressed by the venom gland.

Its subcellular location is the secreted. It carries out the reaction a 1,2-diacyl-sn-glycero-3-phosphocholine + H2O = a 1-acyl-sn-glycero-3-phosphocholine + a fatty acid + H(+). Its function is as follows. Snake venom phospholipase A2 (PLA2) that inhibits collagen-induced platelet aggregation. PLA2 catalyzes the calcium-dependent hydrolysis of the 2-acyl groups in 3-sn-phosphoglycerides. The sequence is that of Acidic phospholipase A2 S17-58 from Austrelaps superbus (Lowland copperhead snake).